Here is a 190-residue protein sequence, read N- to C-terminus: MTTLEIWLLAISLAMDCFTVSITSGIIMRRICWRTFFIMAFFFGLFQAVMPLIGWFAASRFSHLIEDYDHWIAFGLLAFWGGRMIKESFSNEDKRCFDPTKLKVVVTLAIATSIDALAIGISFAFVGINSFTSILSPIVIIGFTSFVISTLGSLIGVFCGKRFNLRMELWGGLVLIIIGVKILIEHLFLS.

6 helical membrane-spanning segments follow: residues 6–26, 36–56, 61–81, 108–128, 138–158, and 169–189; these read IWLL…TSGI, FFIM…IGWF, FSHL…AFWG, LAIA…FVGI, IVII…IGVF, and LWGG…HLFL.

Belongs to the MntP (TC 9.B.29) family.

It is found in the cell inner membrane. Probably functions as a manganese efflux pump. The protein is Putative manganese efflux pump MntP of Phocaeicola vulgatus (strain ATCC 8482 / DSM 1447 / JCM 5826 / CCUG 4940 / NBRC 14291 / NCTC 11154) (Bacteroides vulgatus).